Consider the following 155-residue polypeptide: Molybdopterin synthase catalytic subunit 2 (155 aa).

Substrate is bound by residues 101–102 (HR), Lys-117, and 124–126 (KKE).

The protein belongs to the MoaE family. MOCS2B subfamily. As to quaternary structure, heterotetramer; composed of 2 small (MOCS2A) and 2 large (MOCS2B) subunits.

Its subcellular location is the cytoplasm. The enzyme catalyses 2 [molybdopterin-synthase sulfur-carrier protein]-C-terminal-Gly-aminoethanethioate + cyclic pyranopterin phosphate + H2O = molybdopterin + 2 [molybdopterin-synthase sulfur-carrier protein]-C-terminal Gly-Gly + 2 H(+). It participates in cofactor biosynthesis; molybdopterin biosynthesis. Its function is as follows. Catalytic subunit of the molybdopterin synthase complex, a complex that catalyzes the conversion of precursor Z into molybdopterin. Acts by mediating the incorporation of 2 sulfur atoms from thiocarboxylated MOCS2A into precursor Z to generate a dithiolene group. The polypeptide is Molybdopterin synthase catalytic subunit 2 (Aedes aegypti (Yellowfever mosquito)).